The chain runs to 121 residues: Large ribosomal subunit protein bL20 (121 aa).

The protein belongs to the bacterial ribosomal protein bL20 family.

Functionally, binds directly to 23S ribosomal RNA and is necessary for the in vitro assembly process of the 50S ribosomal subunit. It is not involved in the protein synthesizing functions of that subunit. The chain is Large ribosomal subunit protein bL20 from Orientia tsutsugamushi (strain Ikeda) (Rickettsia tsutsugamushi).